Here is a 210-residue protein sequence, read N- to C-terminus: Thymidylate kinase (210 aa).

10-17 (GGEGAGKS) contacts ATP.

This sequence belongs to the thymidylate kinase family.

The catalysed reaction is dTMP + ATP = dTDP + ADP. Functionally, phosphorylation of dTMP to form dTDP in both de novo and salvage pathways of dTTP synthesis. The chain is Thymidylate kinase from Magnetococcus marinus (strain ATCC BAA-1437 / JCM 17883 / MC-1).